The sequence spans 431 residues: Protein SHQ1 homolog (431 aa).

This sequence belongs to the SHQ1 family.

In terms of biological role, required for the quantitative accumulation of H/ACA ribonucleoproteins (RNPs). The polypeptide is Protein SHQ1 homolog (Caenorhabditis elegans).